Here is a 146-residue protein sequence, read N- to C-terminus: Ribosomal RNA large subunit methyltransferase H (146 aa).

S-adenosyl-L-methionine is bound by residues L68, G95, and 114–119 (LSSLTF).

It belongs to the RNA methyltransferase RlmH family. As to quaternary structure, homodimer.

It is found in the cytoplasm. The catalysed reaction is pseudouridine(1915) in 23S rRNA + S-adenosyl-L-methionine = N(3)-methylpseudouridine(1915) in 23S rRNA + S-adenosyl-L-homocysteine + H(+). In terms of biological role, specifically methylates the pseudouridine at position 1915 (m3Psi1915) in 23S rRNA. The chain is Ribosomal RNA large subunit methyltransferase H from Thermodesulfovibrio yellowstonii (strain ATCC 51303 / DSM 11347 / YP87).